A 195-amino-acid polypeptide reads, in one-letter code: Dephospho-CoA kinase (195 aa).

The DPCK domain maps to 2–195 (IISLTGGIGV…DIVDSLNLNT (194 aa)). 10 to 15 (GVGKSF) is an ATP binding site.

Belongs to the CoaE family.

The protein localises to the cytoplasm. It catalyses the reaction 3'-dephospho-CoA + ATP = ADP + CoA + H(+). The protein operates within cofactor biosynthesis; coenzyme A biosynthesis; CoA from (R)-pantothenate: step 5/5. In terms of biological role, catalyzes the phosphorylation of the 3'-hydroxyl group of dephosphocoenzyme A to form coenzyme A. The polypeptide is Dephospho-CoA kinase (Wolbachia pipientis wMel).